The following is a 245-amino-acid chain: Carbohydrate deacetylase (245 aa).

H59 and H125 together coordinate Mg(2+).

The protein belongs to the YdjC deacetylase family. In terms of assembly, homodimer. Mg(2+) is required as a cofactor.

In terms of biological role, probably catalyzes the deacetylation of acetylated carbohydrates an important step in the degradation of oligosaccharides. The sequence is that of Carbohydrate deacetylase from Listeria welshimeri serovar 6b (strain ATCC 35897 / DSM 20650 / CCUG 15529 / CIP 8149 / NCTC 11857 / SLCC 5334 / V8).